Reading from the N-terminus, the 396-residue chain is L-lactate dehydrogenase (396 aa).

The 380-residue stretch at 1-380 (MIISAASDYR…SGDSLVQELG (380 aa)) folds into the FMN hydroxy acid dehydrogenase domain. Tyr24 provides a ligand contact to substrate. Positions 106 and 127 each coordinate FMN. Tyr129 is a substrate binding site. Thr155 serves as a coordination point for FMN. Arg164 lines the substrate pocket. Lys251 serves as a coordination point for FMN. His275 serves as the catalytic Proton acceptor. Arg278 is a substrate binding site. Residue 306 to 330 (DSGIRNGLDVVRMIALGADTVLLGR) coordinates FMN.

It belongs to the FMN-dependent alpha-hydroxy acid dehydrogenase family. FMN serves as cofactor.

Its subcellular location is the cell inner membrane. The enzyme catalyses (S)-lactate + A = pyruvate + AH2. Its function is as follows. Catalyzes the conversion of L-lactate to pyruvate. Is coupled to the respiratory chain. The protein is L-lactate dehydrogenase of Salmonella newport (strain SL254).